Reading from the N-terminus, the 116-residue chain is uncharacterized protein (116 aa).

A VOC domain is found at 5 to 113 (EVKMVVLSTE…TGNGLVFYSP (109 aa)). An Isoglutamyl lysine isopeptide (Lys-Gln) (interchain with Q-Cter in protein Pup) cross-link involves residue lysine 76.

This is an uncharacterized protein from Mycolicibacterium smegmatis (strain ATCC 700084 / mc(2)155) (Mycobacterium smegmatis).